The sequence spans 437 residues: MTHYHFVGIKGSGMSSLAQIMHDLGHEVQGSDIENYVFTEVALRNKGIKILPFDANNIKEDMVVIQGNAFASSHEEKARAHQMKLDVVSYNDFLGQIIDQYTSVAVTGAHGKTSTTGLLSHVMNGDKKTSFLIGDGTGMGLPESDYFAFEACEYRRHFLSYKPDYAIMTNIDFDHPDYFKDINDVFDAFQEMAHNVKKGIIAWGDDEHLRKIEADVPIYYYGFKDSDDIYAQNIQITDKGTAFDVYVDGEFYDHFLSPQYGDHTVLNALAVIAISYLEKLDVTNIKEALETFGGVKRRFNETTIANQVIVDDYAHHPREISATIETARKKYPHKEVVAVFQPHTFSRTQAFLNEFAESLSKADRVFLCEIFGSIRENTGALTIQDLIDKIEGASLINEDSINVLEQFDNAVVLFKGAGDIQKLQNAYLDKLGMKNAF.

108–114 is an ATP binding site; it reads GAHGKTS.

The protein belongs to the MurCDEF family.

Its subcellular location is the cytoplasm. The catalysed reaction is UDP-N-acetyl-alpha-D-muramate + L-alanine + ATP = UDP-N-acetyl-alpha-D-muramoyl-L-alanine + ADP + phosphate + H(+). The protein operates within cell wall biogenesis; peptidoglycan biosynthesis. Functionally, cell wall formation. The chain is UDP-N-acetylmuramate--L-alanine ligase from Staphylococcus aureus.